We begin with the raw amino-acid sequence, 468 residues long: Argininosuccinate lyase (468 aa).

This sequence belongs to the lyase 1 family. Argininosuccinate lyase subfamily.

Its subcellular location is the cytoplasm. The catalysed reaction is 2-(N(omega)-L-arginino)succinate = fumarate + L-arginine. It functions in the pathway amino-acid biosynthesis; L-arginine biosynthesis; L-arginine from L-ornithine and carbamoyl phosphate: step 3/3. In Sphingopyxis alaskensis (strain DSM 13593 / LMG 18877 / RB2256) (Sphingomonas alaskensis), this protein is Argininosuccinate lyase.